A 389-amino-acid polypeptide reads, in one-letter code: Abscission/NoCut checkpoint regulator (389 aa).

An FYVE-type zinc finger spans residues 1-58 (MESRCYGCAVKFTLFKKEYGCKNCGRAFCNGCLSFSALVPRAGNTQQKVCKQCHTILT). Residues Cys5, Cys8, Cys21, Cys24, Cys29, Cys32, Cys50, and Cys53 each contribute to the Zn(2+) site. A Phosphoserine modification is found at Ser69. Residues 99 to 112 (DQAIAERLARLRQE) carry the MIM1-A motif. Residue Lys132 forms a Glycyl lysine isopeptide (Lys-Gly) (interchain with G-Cter in SUMO2) linkage. 2 disordered regions span residues 158-177 (PSHT…QAQQ) and 204-227 (QNDL…SQSL). Low complexity predominate over residues 167 to 177 (QAPDTRTQAQQ). A compositionally biased stretch (polar residues) spans 214-226 (SQRTNSQGQASQS). Ser219 carries the phosphoserine modification. Residues 226–261 (SLEEEKYKLLAEAAVELQEENTRQERILALAKRLAV) are a coiled coil. Positions 252–265 (ILALAKRLAVLKGQ) match the MIM1-B motif. Ser280 is subject to Phosphoserine.

In terms of assembly, interacts (via MIM1-B) with VPS4A; interaction takes place at the midbody ring following cytokinesis checkpoint activation.

It localises to the cytoplasm. It is found in the cytoskeleton. The protein resides in the microtubule organizing center. The protein localises to the centrosome. Its subcellular location is the cleavage furrow. It localises to the midbody. It is found in the midbody ring. Key regulator of abscission step in cytokinesis: part of the cytokinesis checkpoint, a process required to delay abscission to prevent both premature resolution of intercellular chromosome bridges and accumulation of DNA damage. Together with CHMP4C, required to retain abscission-competent VPS4 (VPS4A and/or VPS4B) at the midbody ring until abscission checkpoint signaling is terminated at late cytokinesis. Deactivation of AURKB results in dephosphorylation of CHMP4C followed by its dissociation from ZFYVE19/ANCHR and VPS4 and subsequent abscission. In Mus musculus (Mouse), this protein is Abscission/NoCut checkpoint regulator (Zfyve19).